The following is an 804-amino-acid chain: Lon protease 2 (804 aa).

The Lon N-terminal domain occupies 19 to 216; it reads VPILPLRNSV…LVLAMVGRQL (198 aa). Position 367 to 374 (367 to 374) interacts with ATP; the sequence is GPPGVGKT. Residues 603–784 enclose the Lon proteolytic domain; it reads TLQPGVATGL…EEILPLVLEP (182 aa). Residues serine 690 and lysine 733 contribute to the active site. The tract at residues 782-804 is disordered; that stretch reads LEPPRRAPAQSASPEELEEQAGV.

This sequence belongs to the peptidase S16 family. As to quaternary structure, homohexamer. Organized in a ring with a central cavity.

The protein resides in the cytoplasm. The catalysed reaction is Hydrolysis of proteins in presence of ATP.. Its function is as follows. ATP-dependent serine protease that mediates the selective degradation of mutant and abnormal proteins as well as certain short-lived regulatory proteins. Required for cellular homeostasis and for survival from DNA damage and developmental changes induced by stress. Degrades polypeptides processively to yield small peptide fragments that are 5 to 10 amino acids long. Binds to DNA in a double-stranded, site-specific manner. This is Lon protease 2 from Sorangium cellulosum (strain So ce56) (Polyangium cellulosum (strain So ce56)).